The chain runs to 889 residues: Cytoplasmic aconitate hydratase (889 aa).

Substrate-binding positions include Q86 and 205 to 207 (DSH). C437, C503, and C506 together coordinate [4Fe-4S] cluster. Substrate contacts are provided by residues R536, R541, R699, and 779 to 780 (SR).

The protein belongs to the aconitase/IPM isomerase family. As to quaternary structure, interacts (when associated with the 4Fe-4S) with FBXL5. Interacts with frataxin(81-210). [4Fe-4S] cluster serves as cofactor.

It is found in the cytoplasm. Its subcellular location is the cytosol. The catalysed reaction is citrate = D-threo-isocitrate. In terms of biological role, bifunctional iron sensor that switches between 2 activities depending on iron availability. Iron deprivation, promotes its mRNA binding activity through which it regulates the expression of genes involved in iron uptake, sequestration and utilization. Binds to iron-responsive elements (IRES) in the untranslated region of target mRNAs preventing for instance the translation of ferritin and aminolevulinic acid synthase and stabilizing the transferrin receptor mRNA. Conversely, when cellular iron levels are high, binds a 4Fe-4S cluster which precludes RNA binding activity and promotes the aconitase activity, the isomerization of citrate to isocitrate via cis-aconitate. The polypeptide is Cytoplasmic aconitate hydratase (Aco1) (Rattus norvegicus (Rat)).